Here is a 336-residue protein sequence, read N- to C-terminus: tRNA-dihydrouridine(20/20a) synthase (336 aa).

FMN is bound by residues 24 to 26 (PMM) and Gln-77. The active-site Proton donor is Cys-107. FMN is bound by residues Lys-146, His-178, 218-220 (NGG), and 240-241 (GR).

Belongs to the Dus family. DusA subfamily. The cofactor is FMN.

The enzyme catalyses 5,6-dihydrouridine(20) in tRNA + NADP(+) = uridine(20) in tRNA + NADPH + H(+). It catalyses the reaction 5,6-dihydrouridine(20) in tRNA + NAD(+) = uridine(20) in tRNA + NADH + H(+). It carries out the reaction 5,6-dihydrouridine(20a) in tRNA + NADP(+) = uridine(20a) in tRNA + NADPH + H(+). The catalysed reaction is 5,6-dihydrouridine(20a) in tRNA + NAD(+) = uridine(20a) in tRNA + NADH + H(+). Functionally, catalyzes the synthesis of 5,6-dihydrouridine (D), a modified base found in the D-loop of most tRNAs, via the reduction of the C5-C6 double bond in target uridines. Specifically modifies U20 and U20a in tRNAs. The chain is tRNA-dihydrouridine(20/20a) synthase from Pseudomonas syringae pv. tomato (strain ATCC BAA-871 / DC3000).